The primary structure comprises 513 residues: Calcium-binding mitochondrial carrier protein SCaMC-2 (513 aa).

Topologically, residues 1 to 233 (MARPRSLVSP…EKQTGMWWRH (233 aa)) are mitochondrial intermembrane. EF-hand domains lie at 55–90 (EHET…LGVH), 91–124 (RTEL…RDHE), 122–157 (DHEK…LGVN), and 158–193 (ISEQ…HPAE). 9 residues coordinate Ca(2+): D68, N70, D72, D79, D104, D106, D108, Q110, and E115. 3 Solcar repeats span residues 228–314 (GMWW…MKRI), 322–407 (LGIH…LKNA), and 419–507 (PGVF…LKLT). The helical transmembrane segment at 234 to 251 (LVAGGGAGAVSRTCTAPL) threads the bilayer. Over 252-288 (DRLKVLMQVHASRSNNMSMLGGFTQMIREGGIRSLWR) the chain is Mitochondrial matrix. The helical transmembrane segment at 289-308 (GNGINVIKIAPESAIKFMAY) threads the bilayer. Topologically, residues 309-331 (EQMKRIIGSDQETLGIHERLVAG) are mitochondrial intermembrane. Residues 332 to 345 (SLAGVIAQSSIYPM) traverse the membrane as a helical segment. The Mitochondrial matrix portion of the chain corresponds to 346 to 381 (EVLKTRMALRKTGQYQGMLDCGKKILLKEGVSAFYK). Residues 382–401 (GYVPNMLGIIPYAGIDLAVY) traverse the membrane as a helical segment. Residues 402-424 (ETLKNAWLQRYATSSADPGVFVL) lie on the Mitochondrial intermembrane side of the membrane. Residues 425 to 442 (LACGTISSTCGQLASYPL) traverse the membrane as a helical segment. Residues 443–481 (ALVRTRMQAEASVEGAPQMTMSKLFKHIVKTEGAFGLYR) lie on the Mitochondrial matrix side of the membrane. Residues 482 to 501 (GLAPNFMKVIPAVSISYVVY) traverse the membrane as a helical segment. The Mitochondrial intermembrane segment spans residues 502-513 (ENLKLTLGVQSR).

Belongs to the mitochondrial carrier (TC 2.A.29) family.

It is found in the mitochondrion inner membrane. Functionally, calcium-dependent mitochondrial solute carrier. This chain is Calcium-binding mitochondrial carrier protein SCaMC-2 (slc25a25), found in Xenopus tropicalis (Western clawed frog).